The following is a 185-amino-acid chain: Threonylcarbamoyl-AMP synthase (185 aa).

In terms of domain architecture, YrdC-like spans 1–185 (MKNFEQVLKA…AKTSQILRQG (185 aa)). The tract at residues 163-185 (ETSGRNKPSEIRDAKTSQILRQG) is disordered. Basic and acidic residues predominate over residues 164–177 (TSGRNKPSEIRDAK).

Belongs to the SUA5 family. TsaC subfamily.

Its subcellular location is the cytoplasm. The enzyme catalyses L-threonine + hydrogencarbonate + ATP = L-threonylcarbamoyladenylate + diphosphate + H2O. Its function is as follows. Required for the formation of a threonylcarbamoyl group on adenosine at position 37 (t(6)A37) in tRNAs that read codons beginning with adenine. Catalyzes the conversion of L-threonine, HCO(3)(-)/CO(2) and ATP to give threonylcarbamoyl-AMP (TC-AMP) as the acyladenylate intermediate, with the release of diphosphate. The chain is Threonylcarbamoyl-AMP synthase from Vibrio campbellii (strain ATCC BAA-1116).